We begin with the raw amino-acid sequence, 44 residues long: Thymosin beta-10 (44 aa).

The protein belongs to the thymosin beta family.

It localises to the cytoplasm. Its subcellular location is the cytoskeleton. Functionally, plays an important role in the organization of the cytoskeleton. Binds to and sequesters actin monomers (G actin) and therefore inhibits actin polymerization. This is Thymosin beta-10 from Torpedo marmorata (Marbled electric ray).